The following is a 1190-amino-acid chain: ATPase histone chaperone abo1 (1190 aa).

Positions 1–11 (MKEEASEHGGS) are enriched in basic and acidic residues. Disordered stretches follow at residues 1 to 185 (MKEE…RKTH) and 204 to 253 (YIDS…DLAD). 2 stretches are compositionally biased toward acidic residues: residues 52 to 62 (QEDEGDEDWEE) and 82 to 106 (SEGDDEPFEVSESSALEDELSDSED). The span at 112 to 131 (VRSKPKYKPGTRRSTRLRNR) shows a compositional bias: basic residues. The segment covering 141-152 (EEHRPILRERTS) has biased composition (basic and acidic residues). 309 to 314 (PGTGKT) contributes to the ATP binding site. Residues 794-922 (RLLNKLKIKL…ANVLLGVEDM (129 aa)) enclose the Bromo domain.

Belongs to the AAA ATPase family. In terms of assembly, homohexamer. Interacts with the FACT complex subunits spt16 and pob3. Interacts with histone H3-H4 (via N-terminus).

It is found in the nucleus. The protein resides in the chromosome. The catalysed reaction is ATP + H2O = ADP + phosphate + H(+). In terms of biological role, ATPase histone chaperone which facilitates loading of histone H3-H4 onto DNA in an ATP-dependent manner. Plays a genome-wide role in nucleosome organization and establishment of chromatin. Also plays a role in heterochromatin assembly by stabilizing recruitment of the histone methyltransferase clr4 to methylated histone H3, to promote the transition from H3K9me2 to H3K9me3. This is ATPase histone chaperone abo1 from Schizosaccharomyces pombe (strain 972 / ATCC 24843) (Fission yeast).